Consider the following 321-residue polypeptide: Glucokinase (321 aa).

An ATP-binding site is contributed by 8 to 13 (GDVGGT).

Belongs to the bacterial glucokinase family.

It is found in the cytoplasm. It carries out the reaction D-glucose + ATP = D-glucose 6-phosphate + ADP + H(+). In Shigella sonnei (strain Ss046), this protein is Glucokinase.